The sequence spans 417 residues: Calreticulin (417 aa).

The first 17 residues, methionine 1–alanine 17, serve as a signal peptide directing secretion. Positions glutamate 18 to glutamate 197 are N-domain. Glutamine 26 is a Ca(2+) binding site. N6-acetyllysine is present on lysine 48. Lysine 62 and lysine 64 together coordinate Ca(2+). Position 64 is an N6-(2-hydroxyisobutyryl)lysine (lysine 64). Cysteine 105 and cysteine 137 are joined by a disulfide. 4 residues coordinate an alpha-D-glucoside: tyrosine 109, lysine 111, tyrosine 128, and aspartate 135. Lysine 159 is subject to N6-acetyllysine. One copy of the 1-1 repeat lies at valine 191 to phenylalanine 202. Positions valine 191 to glutamate 255 are 4 X approximate repeats. The segment at serine 193–proline 277 is disordered. The interval aspartate 198 to tyrosine 308 is P-domain. Basic and acidic residues predominate over residues lysine 207 to glutamate 251. Lysine 209 is modified (N6-acetyllysine). Tandem repeats lie at residues aspartate 210–glutamate 221, aspartate 227–lysine 238, aspartate 244–glutamate 255, glycine 259–proline 269, glycine 273–proline 283, and glycine 287–proline 297. The interval aspartate 237–glutamate 270 is interaction with PPIB. The span at aspartate 252 to tryptophan 261 shows a compositional bias: acidic residues. The 3 X approximate repeats stretch occupies residues glycine 259–proline 297. Residues aspartate 309–leucine 417 are C-domain. Aspartate 317 contacts an alpha-D-glucoside. Aspartate 328 contributes to the Ca(2+) binding site. Residues threonine 350 to leucine 417 are disordered. The span at alanine 352–glutamate 379 shows a compositional bias: basic and acidic residues. A compositionally biased stretch (acidic residues) spans glutamate 380 to threonine 408. Residues lysine 414 to leucine 417 carry the Prevents secretion from ER motif.

It belongs to the calreticulin family. In terms of assembly, monomer. Component of an EIF2 complex at least composed of CELF1/CUGBP1, CALR, CALR3, EIF2S1, EIF2S2, HSP90B1 and HSPA5. Interacts with PDIA3/ERp57 and SPACA9. Interacts with TRIM21. Interacts with NR3C1. Interacts with PPIB. Interacts (via P-domain) with PDIA5. Interacts with GABARAP. Interacts with CLCC1.

It is found in the endoplasmic reticulum lumen. It localises to the cytoplasm. The protein resides in the cytosol. Its subcellular location is the cytolytic granule. The protein localises to the secreted. It is found in the extracellular space. It localises to the extracellular matrix. The protein resides in the cell surface. Its subcellular location is the sarcoplasmic reticulum lumen. The protein localises to the cytoplasmic vesicle. It is found in the secretory vesicle. It localises to the cortical granule. Calcium-binding chaperone that promotes folding, oligomeric assembly and quality control in the endoplasmic reticulum (ER) via the calreticulin/calnexin cycle. This lectin interacts transiently with almost all of the monoglucosylated glycoproteins that are synthesized in the ER. Interacts with the DNA-binding domain of NR3C1 and mediates its nuclear export. Involved in maternal gene expression regulation. May participate in oocyte maturation via the regulation of calcium homeostasis. Present in the cortical granules of non-activated oocytes, is exocytosed during the cortical reaction in response to oocyte activation and might participate in the block to polyspermy. The protein is Calreticulin (CALR) of Cricetulus griseus (Chinese hamster).